Consider the following 489-residue polypeptide: 5'-AMP-activated protein kinase subunit gamma-3 (489 aa).

Residues 1 to 95 (MEPELEHTLP…TRQEATFPKA (95 aa)) form a disordered region. Residues 32–47 (GENSWPSPAVATSSER) show a composition bias toward polar residues. 3 consecutive CBS domains span residues 197-258 (MATS…RSPL), 280-340 (CFKP…LLPR), and 355-415 (TFRD…HLDM). ADP is bound by residues arginine 225, 240–245 (MLTITD), valine 285, 306–307 (HR), and lysine 325. AMP is bound by residues arginine 225, 240 to 245 (MLTITD), valine 285, histidine 306, 306 to 307 (HR), lysine 325, threonine 355, alanine 360, 381 to 382 (SA), 397 to 400 (SRFD), arginine 424, leucine 432, histidine 453, 453 to 454 (HR), and 469 to 472 (SLSD). ATP-binding positions include arginine 225, 240–245 (MLTITD), valine 285, 306–307 (HR), arginine 307, and lysine 325. The AMPK pseudosubstrate signature appears at 293-314 (LFEAVYALIKNRIHRLPVLDPV). Residues 397-400 (SRFD), arginine 424, leucine 432, and 453-454 (HR) contribute to the ADP site. ATP contacts are provided by residues 397–400 (SRFD), arginine 424, leucine 432, and 453–454 (HR). A CBS 4 domain is found at 427–486 (CLEGVLSCQPHESLGEVIDRIAREQVHRLVLVDETQHLLGVVSLSDILQALVLSPAGIDA).

The protein belongs to the 5'-AMP-activated protein kinase gamma subunit family. As to quaternary structure, AMPK is a heterotrimer of an alpha catalytic subunit (PRKAA1 or PRKAA2), a beta (PRKAB1 or PRKAB2) and a gamma non-catalytic subunits (PRKAG1, PRKAG2 or PRKAG3). Interacts with FNIP1 and FNIP2. Phosphorylated by ULK1; leading to negatively regulate AMPK activity and suggesting the existence of a regulatory feedback loop between ULK1 and AMPK. In terms of processing, glycosylated; O-GlcNAcylated by OGT, promoting the AMP-activated protein kinase (AMPK) activity.

In terms of biological role, AMP/ATP-binding subunit of AMP-activated protein kinase (AMPK), an energy sensor protein kinase that plays a key role in regulating cellular energy metabolism. In response to reduction of intracellular ATP levels, AMPK activates energy-producing pathways and inhibits energy-consuming processes: inhibits protein, carbohydrate and lipid biosynthesis, as well as cell growth and proliferation. AMPK acts via direct phosphorylation of metabolic enzymes, and by longer-term effects via phosphorylation of transcription regulators. AMPK also acts as a regulator of cellular polarity by remodeling the actin cytoskeleton; probably by indirectly activating myosin. The AMPK gamma3 subunit is a non-catalytic subunit with a regulatory role in muscle energy metabolism. It mediates binding to AMP, ADP and ATP, leading to AMPK activation or inhibition: AMP-binding results in allosteric activation of alpha catalytic subunit (PRKAA1 or PRKAA2) both by inducing phosphorylation and preventing dephosphorylation of catalytic subunits. ADP also stimulates phosphorylation, without stimulating already phosphorylated catalytic subunit. ATP promotes dephosphorylation of catalytic subunit, rendering the AMPK enzyme inactive. The chain is 5'-AMP-activated protein kinase subunit gamma-3 (Prkag3) from Mus musculus (Mouse).